The sequence spans 354 residues: Glutamine synthetase (354 aa).

The 80-residue stretch at phenylalanine 22–glycine 101 folds into the GS beta-grasp domain. The 247-residue stretch at histidine 108 to lysine 354 folds into the GS catalytic domain.

It belongs to the glutamine synthetase family. In terms of assembly, homooctamer.

It localises to the cytoplasm. The enzyme catalyses L-glutamate + NH4(+) + ATP = L-glutamine + ADP + phosphate + H(+). The sequence is that of Glutamine synthetase (GLN1) from Amanita muscaria (Fly agaric).